A 102-amino-acid chain; its full sequence is uncharacterized protein (102 aa).

2 helical membrane passes run 21–43 (FSSS…TPVF) and 58–80 (SFAV…YFFC).

The protein resides in the membrane. This is an uncharacterized protein from Saccharomyces cerevisiae (strain ATCC 204508 / S288c) (Baker's yeast).